The primary structure comprises 202 residues: ATP-dependent Clp protease proteolytic subunit (202 aa).

Catalysis depends on Ser106, which acts as the Nucleophile. The active site involves His131.

It belongs to the peptidase S14 family. Fourteen ClpP subunits assemble into 2 heptameric rings which stack back to back to give a disk-like structure with a central cavity, resembling the structure of eukaryotic proteasomes.

It localises to the cytoplasm. It carries out the reaction Hydrolysis of proteins to small peptides in the presence of ATP and magnesium. alpha-casein is the usual test substrate. In the absence of ATP, only oligopeptides shorter than five residues are hydrolyzed (such as succinyl-Leu-Tyr-|-NHMec, and Leu-Tyr-Leu-|-Tyr-Trp, in which cleavage of the -Tyr-|-Leu- and -Tyr-|-Trp bonds also occurs).. Cleaves peptides in various proteins in a process that requires ATP hydrolysis. Has a chymotrypsin-like activity. Plays a major role in the degradation of misfolded proteins. The polypeptide is ATP-dependent Clp protease proteolytic subunit (Verminephrobacter eiseniae (strain EF01-2)).